A 322-amino-acid chain; its full sequence is Cysteine protease yopT1 (322 aa).

Residues 42–69 (LSHSNRQKKLSATIKHNQSSRSMLDRKL) are disordered. Active-site residues include Cys139, His258, and Asp274.

Belongs to the peptidase C58 family. In terms of assembly, interacts with human ARHA.

It is found in the secreted. Functionally, cysteine protease, which is translocated into infected cells and plays a central role in pathogenesis by cleaving the C-terminus end of the human small GTPase RhoA/ARHA, a regulator of cytoskeleton. Once cleaved, ARHA loses its lipid modification, and is released from the cell membrane, leading to the subsequent disruption of actin cytoskeleton of the host cell. The polypeptide is Cysteine protease yopT1 (yopT1) (Yersinia enterocolitica serotype O:8 / biotype 1B (strain NCTC 13174 / 8081)).